The chain runs to 1106 residues: Zinc finger protein GLI1 (1106 aa).

The interval M1–R20 is SNAG domain. Residues S120 to L124 form an interaction with SUFU region. 5 consecutive C2H2-type zinc fingers follow at residues T235–H260, F268–H295, H301–H325, Y331–H356, and Y362–H387. The tract at residues K283–H291 is interaction with DNA. Interaction with DNA stretches follow at residues A345–K350 and D375–K381. Disordered regions lie at residues D375–P485, G516–G580, Y732–G792, E817–S889, and G914–K942. A compositionally biased stretch (basic and acidic residues) spans E413–R428. Residues P442–S463 show a composition bias toward polar residues. N6-acetyllysine is present on K518. Composition is skewed to low complexity over residues S544–S560 and G737–L753. Pro residues predominate over residues G754 to C766. A compositionally biased stretch (polar residues) spans Q768–T779. K1003 is covalently cross-linked (Glycyl lysine isopeptide (Lys-Gly) (interchain with G-Cter in SUMO2)). The disordered stretch occupies residues D1054–N1087.

The protein belongs to the GLI C2H2-type zinc-finger protein family. In terms of assembly, interacts with KIF7. Interacts with STK36. Interacts with ZIC1; the interaction enhances transcription activation. Interacts with SUFU; this inhibits transcriptional activation by GLI1. Post-translationally, phosphorylated in vitro by ULK3. Acetylation at Lys-518 down-regulates transcriptional activity. Deacetylated by HDAC1. In terms of processing, ubiquitinated by the CRL2(FEM1B) complex, suppressing GLI1 transcriptional activator activity. As to expression, detected in testis (at protein level). Testis, myometrium and fallopian tube. Also expressed in the brain with highest expression in the cerebellum, optic nerve and olfactory tract. Isoform 1 is detected in brain, spleen, pancreas, liver, kidney and placenta; isoform 2 is not detectable in these tissues.

The protein localises to the cytoplasm. It is found in the nucleus. Functionally, acts as a transcriptional activator. Binds to the DNA consensus sequence 5'-GACCACCCA-3'. Regulates the transcription of specific genes during normal development. Plays a role in craniofacial development and digital development, as well as development of the central nervous system and gastrointestinal tract. Mediates SHH signaling. Plays a role in cell proliferation and differentiation via its role in SHH signaling. In terms of biological role, acts as a transcriptional activator, but activates a different set of genes than isoform 1. Activates expression of CD24, unlike isoform 1. Mediates SHH signaling. Promotes cancer cell migration. This chain is Zinc finger protein GLI1 (GLI1), found in Homo sapiens (Human).